The following is a 229-amino-acid chain: DNA mismatch repair protein MutH (229 aa).

This sequence belongs to the MutH family.

The protein localises to the cytoplasm. Its function is as follows. Sequence-specific endonuclease that cleaves unmethylated GATC sequences. It is involved in DNA mismatch repair. The polypeptide is DNA mismatch repair protein MutH (Shigella dysenteriae serotype 1 (strain Sd197)).